The sequence spans 1218 residues: Chitin synthase 4 (1218 aa).

2 disordered regions span residues 1 to 93 (MAEP…PERN) and 132 to 190 (TVSS…RRQK). The segment covering 14–34 (TRDKSHSPYRESPSRRLRDVE) has biased composition (basic and acidic residues). A glycan (N-linked (GlcNAc...) asparagine) is linked at Asn50. 2 stretches are compositionally biased toward polar residues: residues 71–80 (SNPNPMSQSD) and 133–142 (VSSGSTQQDT). Residues 175-190 (RKDTRNLTEEEKRRQK) show a composition bias toward basic and acidic residues. Asn180 carries N-linked (GlcNAc...) asparagine glycosylation. Helical transmembrane passes span 200–220 (IWNIYCAVVTFWAPDCLLQCF) and 235–255 (VGLISIILLIAAFVGFLTFGF). Asn365, Asn404, and Asn426 each carry an N-linked (GlcNAc...) asparagine glycan. A helical membrane pass occupies residues 487–507 (VVLYVSLVFILAIVAAKFFLA). Disordered stretches follow at residues 548–570 (PKITDPASTVTGSDGRTSKRGSM) and 582–606 (YAVDRRSSRPPPTTMTSQSSNAKLL). Residues 553–562 (PASTVTGSDG) are compositionally biased toward polar residues. 3 N-linked (GlcNAc...) asparagine glycosylation sites follow: Asn617, Asn903, and Asn1030. 3 helical membrane-spanning segments follow: residues 1062–1082 (IGTLVLPAAISFTFYLIIISI), 1087–1107 (VPVIPLVLLALILGLPAILIV), and 1115–1135 (YILWMGIYLLSLPIWNFVLPA). The interval 1188-1218 (QANGSVWNQQPPTRPPSGYGSMHGFEPYRDY) is disordered. Polar residues predominate over residues 1189–1198 (ANGSVWNQQP). N-linked (GlcNAc...) asparagine glycosylation is present at Asn1190.

The protein belongs to the chitin synthase family. Class IV subfamily. Maximal activity requires trypsin activation, suggesting a zymogenic nature.

The protein localises to the cell membrane. The enzyme catalyses [(1-&gt;4)-N-acetyl-beta-D-glucosaminyl](n) + UDP-N-acetyl-alpha-D-glucosamine = [(1-&gt;4)-N-acetyl-beta-D-glucosaminyl](n+1) + UDP + H(+). With respect to regulation, activity is stimulated by Mg(2+), and is more inhibited by polyoxin D than by nikkomycin. In terms of biological role, polymerizes chitin, a structural polymer of the cell wall and septum, by transferring the sugar moiety of UDP-GlcNAc to the non-reducing end of the growing chitin polymer. CHS4 synthesizes a large amount of chitin and appears to play a role in the process of cell separation. CHS4 is particularly well suited for functioning at the higher temperatures associated with its poorly characterized saprophic environment and with human infection. The chain is Chitin synthase 4 from Exophiala dermatitidis (strain ATCC 34100 / CBS 525.76 / NIH/UT8656) (Black yeast).